Here is a 215-residue protein sequence, read N- to C-terminus: 2-phospho-L-lactate guanylyltransferase (215 aa).

It belongs to the CofC family. As to quaternary structure, homodimer.

The catalysed reaction is (2S)-2-phospholactate + GTP + H(+) = (2S)-lactyl-2-diphospho-5'-guanosine + diphosphate. It functions in the pathway cofactor biosynthesis; coenzyme F420 biosynthesis. Functionally, guanylyltransferase that catalyzes the activation of (2S)-2-phospholactate (2-PL) as (2S)-lactyl-2-diphospho-5'-guanosine, via the condensation of 2-PL with GTP. It is involved in the biosynthesis of coenzyme F420, a hydride carrier cofactor. The sequence is that of 2-phospho-L-lactate guanylyltransferase from Methanococcoides burtonii (strain DSM 6242 / NBRC 107633 / OCM 468 / ACE-M).